Reading from the N-terminus, the 233-residue chain is Demethylmenaquinone methyltransferase (233 aa).

S-adenosyl-L-methionine contacts are provided by residues Thr-58, Asp-79, and 106–107 (NA).

The protein belongs to the class I-like SAM-binding methyltransferase superfamily. MenG/UbiE family.

The enzyme catalyses a 2-demethylmenaquinol + S-adenosyl-L-methionine = a menaquinol + S-adenosyl-L-homocysteine + H(+). The protein operates within quinol/quinone metabolism; menaquinone biosynthesis; menaquinol from 1,4-dihydroxy-2-naphthoate: step 2/2. Its function is as follows. Methyltransferase required for the conversion of demethylmenaquinol (DMKH2) to menaquinol (MKH2). This chain is Demethylmenaquinone methyltransferase, found in Bacillus velezensis (strain DSM 23117 / BGSC 10A6 / LMG 26770 / FZB42) (Bacillus amyloliquefaciens subsp. plantarum).